A 119-amino-acid chain; its full sequence is Large ribosomal subunit protein uL18 (119 aa).

The protein belongs to the universal ribosomal protein uL18 family. As to quaternary structure, part of the 50S ribosomal subunit; part of the 5S rRNA/L5/L18/L25 subcomplex. Contacts the 5S and 23S rRNAs.

Its function is as follows. This is one of the proteins that bind and probably mediate the attachment of the 5S RNA into the large ribosomal subunit, where it forms part of the central protuberance. This Helicobacter pylori (strain HPAG1) protein is Large ribosomal subunit protein uL18.